Reading from the N-terminus, the 90-residue chain is MINNIIRNQVVTHFADHACMAQATVSIPELDKLATNLQLADTNKDIFGQDRSKLKGIEASRYFSCDNCGRKIAGGRFAQHINKCLDRKRK.

The SGF11-type zinc finger occupies 63 to 84 (FSCDNCGRKIAGGRFAQHINKC).

Belongs to the SGF11 family. As to quaternary structure, component of the 1.8 MDa SAGA transcription coactivator-HAT complex. SAGA is built of 5 distinct domains with specialized functions. Within the SAGA complex, SUS1, SGF11, SGF73 and UBP8 form an additional subcomplex of SAGA called the DUB module (deubiquitination module). Interacts directly with SGF73, SUS1 and UBP8.

The protein resides in the nucleus. In terms of biological role, functions as a component of the transcription regulatory histone acetylation (HAT) complex SAGA. At the promoters, SAGA is required for recruitment of the basal transcription machinery. It influences RNA polymerase II transcriptional activity through different activities such as TBP interaction and promoter selectivity, interaction with transcription activators, and chromatin modification through histone acetylation and deubiquitination. SAGA acetylates nucleosomal histone H3 to some extent (to form H3K9ac, H3K14ac, H3K18ac and H3K23ac). SAGA interacts with DNA via upstream activating sequences (UASs). Involved in transcriptional regulation of a subset of SAGA-regulated genes. Within the SAGA complex, participates in a subcomplex, that specifically deubiquitinates histones H2B. The sequence is that of SAGA-associated factor 11 from Lodderomyces elongisporus (strain ATCC 11503 / CBS 2605 / JCM 1781 / NBRC 1676 / NRRL YB-4239) (Yeast).